We begin with the raw amino-acid sequence, 554 residues long: Glutamine--tRNA ligase (554 aa).

A 'HIGH' region motif is present at residues 34–44; sequence PEPNGYLHIGH. ATP is bound by residues 35-37 and 41-47; these read EPN and HIGHAKS. Residues Asp67 and Tyr212 each coordinate L-glutamine. ATP contacts are provided by residues Thr231, 261 to 262, and 269 to 271; these read RL and MSK. The 'KMSKS' region motif lies at 268-272; that stretch reads VMSKR.

This sequence belongs to the class-I aminoacyl-tRNA synthetase family. As to quaternary structure, monomer.

The protein resides in the cytoplasm. It catalyses the reaction tRNA(Gln) + L-glutamine + ATP = L-glutaminyl-tRNA(Gln) + AMP + diphosphate. This is Glutamine--tRNA ligase from Shigella boydii serotype 4 (strain Sb227).